The primary structure comprises 357 residues: 3-isopropylmalate dehydrogenase (357 aa).

Substrate-binding residues include Arg-97, Arg-107, Arg-135, and Asp-224. Mg(2+) contacts are provided by Asp-224, Asp-248, and Asp-252. Residue 282–294 (GSAPDIAGKNIAN) coordinates NAD(+).

This sequence belongs to the isocitrate and isopropylmalate dehydrogenases family. LeuB type 1 subfamily. Homodimer. The cofactor is Mg(2+). Requires Mn(2+) as cofactor.

The protein localises to the cytoplasm. The enzyme catalyses (2R,3S)-3-isopropylmalate + NAD(+) = 4-methyl-2-oxopentanoate + CO2 + NADH. It functions in the pathway amino-acid biosynthesis; L-leucine biosynthesis; L-leucine from 3-methyl-2-oxobutanoate: step 3/4. Functionally, catalyzes the oxidation of 3-carboxy-2-hydroxy-4-methylpentanoate (3-isopropylmalate) to 3-carboxy-4-methyl-2-oxopentanoate. The product decarboxylates to 4-methyl-2 oxopentanoate. In Prochlorococcus marinus (strain MIT 9312), this protein is 3-isopropylmalate dehydrogenase.